A 428-amino-acid polypeptide reads, in one-letter code: Glutamine synthetase leaf isozyme, chloroplastic (428 aa).

The transit peptide at 1 to 49 (MAQILAPSIQCQTRITKTSPLATPISSKMWSSLVMKQNKKVARSAKFRV) directs the protein to the chloroplast. One can recognise a GS beta-grasp domain in the interval 75–155 (IIAEYIWIGG…VICDAYTPQG (81 aa)). The 270-residue stretch at 159 to 428 (PTNKRHKAAE…LAAQKIALKV (270 aa)) folds into the GS catalytic domain.

This sequence belongs to the glutamine synthetase family. As to quaternary structure, homooctamer.

It localises to the plastid. It is found in the chloroplast. It catalyses the reaction L-glutamate + NH4(+) + ATP = L-glutamine + ADP + phosphate + H(+). Functionally, the light-modulated chloroplast enzyme, encoded by a nuclear gene and expressed primarily in leaves, is responsible for the reassimilation of the ammonia generated by photorespiration. This chain is Glutamine synthetase leaf isozyme, chloroplastic (GS2), found in Medicago sativa (Alfalfa).